A 63-amino-acid chain; its full sequence is Juvenile hormone esterase, isoform B (63 aa).

An N-linked (GlcNAc...) asparagine glycan is attached at N20.

This sequence belongs to the type-B carboxylesterase/lipase family. In terms of tissue distribution, fat body, the site of their biosynthesis, and the hemolymph where it is secreted.

It catalyses the reaction juvenile hormone I + H2O = juvenile hormone I carboxylate + methanol + H(+). The catalysed reaction is juvenile hormone III + H2O = juvenile hormone III carboxylate + methanol + H(+). Its function is as follows. JH esterase plays a crucial role in the decrease of JH activity in lepidopteran insects, by hydrolyzing the methyl ester of JH. It is also involved in the transport of JH. This Trichoplusia ni (Cabbage looper) protein is Juvenile hormone esterase, isoform B.